The following is a 499-amino-acid chain: Calcium/calmodulin-dependent protein kinase type II subunit delta (499 aa).

Ala-2 bears the N-acetylalanine mark. The region spanning 14–272 is the Protein kinase domain; that stretch reads YQLFEELGKG…ASEALKHPWI (259 aa). ATP contacts are provided by residues 20–28 and Lys-43; that span reads LGKGAFSVV. Catalysis depends on Asp-136, which acts as the Proton acceptor. Positions 283-292 are autoinhibitory domain; it reads HRQETVDCLK. Phosphothreonine; by autocatalysis is present on Thr-287. The segment at 291-301 is calmodulin-binding; it reads LKKFNARRKLK. A phosphothreonine; by autocatalysis mark is found at Thr-306 and Thr-307. Ser-315 bears the Phosphoserine mark. Lys-318 is subject to N6-acetyllysine. A phosphoserine mark is found at Ser-319 and Ser-330. Thr-331 carries the post-translational modification Phosphothreonine. Ser-333 is subject to Phosphoserine. A phosphothreonine mark is found at Thr-336 and Thr-337. Ser-404, Ser-490, and Ser-494 each carry phosphoserine.

It belongs to the protein kinase superfamily. CAMK Ser/Thr protein kinase family. CaMK subfamily. As to quaternary structure, CAMK2 is composed of 4 different chains: alpha (CAMK2A), beta (CAMK2B), gamma (CAMK2G), and delta (CAMK2D). The different isoforms assemble into homo- or heteromultimeric holoenzymes composed of 12 subunits with two hexameric rings stacked one on top of the other. Interacts with RRAD CACNB2. Post-translationally, autophosphorylation of Thr-287 following activation by Ca(2+)/calmodulin. Phosphorylation of Thr-287 locks the kinase into an activated state.

The protein resides in the cell membrane. Its subcellular location is the sarcolemma. It localises to the sarcoplasmic reticulum membrane. It catalyses the reaction L-seryl-[protein] + ATP = O-phospho-L-seryl-[protein] + ADP + H(+). The catalysed reaction is L-threonyl-[protein] + ATP = O-phospho-L-threonyl-[protein] + ADP + H(+). Activated by Ca(2+)/calmodulin. Binding of calmodulin results in conformational change that relieves intrasteric autoinhibition and allows autophosphorylation of Thr-287 which turns the kinase in a constitutively active form and confers to the kinase a Ca(2+)-independent activity. Its function is as follows. Calcium/calmodulin-dependent protein kinase involved in the regulation of Ca(2+) homeostatis and excitation-contraction coupling (ECC) in heart by targeting ion channels, transporters and accessory proteins involved in Ca(2+) influx into the myocyte, Ca(2+) release from the sarcoplasmic reticulum (SR), SR Ca(2+) uptake and Na(+) and K(+) channel transport. Targets also transcription factors and signaling molecules to regulate heart function. In its activated form, is involved in the pathogenesis of dilated cardiomyopathy and heart failure. Contributes to cardiac decompensation and heart failure by regulating SR Ca(2+) release via direct phosphorylation of RYR2 Ca(2+) channel on 'Ser-2808'. In the nucleus, phosphorylates the MEF2 repressor HDAC4, promoting its nuclear export and binding to 14-3-3 protein, and expression of MEF2 and genes involved in the hypertrophic program. Is essential for left ventricular remodeling responses to myocardial infarction. In pathological myocardial remodeling acts downstream of the beta adrenergic receptor signaling cascade to regulate key proteins involved in ECC. Regulates Ca(2+) influx to myocytes by binding and phosphorylating the L-type Ca(2+) channel subunit beta-2 CACNB2. In addition to Ca(2+) channels, can target and regulate the cardiac sarcolemmal Na(+) channel Nav1.5/SCN5A and the K+ channel Kv4.3/KCND3, which contribute to arrhythmogenesis in heart failure. Phosphorylates phospholamban (PLN/PLB), an endogenous inhibitor of SERCA2A/ATP2A2, contributing to the enhancement of SR Ca(2+) uptake that may be important in frequency-dependent acceleration of relaxation (FDAR) and maintenance of contractile function during acidosis. May participate in the modulation of skeletal muscle function in response to exercise, by regulating SR Ca(2+) transport through phosphorylation of PLN/PLB and triadin, a ryanodine receptor-coupling factor. In response to interferon-gamma (IFN-gamma) stimulation, catalyzes phosphorylation of STAT1, stimulating the JAK-STAT signaling pathway. The polypeptide is Calcium/calmodulin-dependent protein kinase type II subunit delta (CAMK2D) (Sus scrofa (Pig)).